Here is a 345-residue protein sequence, read N- to C-terminus: DNA-directed RNA polymerase subunit alpha (345 aa).

An alpha N-terminal domain (alpha-NTD) region spans residues 1–233 (MVRNWCSLIR…KQLQVFVGLH (233 aa)). The alpha C-terminal domain (alpha-CTD) stretch occupies residues 256-345 (LNDILLRHVE…EEMGEIQEEG (90 aa)).

Belongs to the RNA polymerase alpha chain family. In terms of assembly, homodimer. The RNAP catalytic core consists of 2 alpha, 1 beta, 1 beta' and 1 omega subunit. When a sigma factor is associated with the core the holoenzyme is formed, which can initiate transcription.

It catalyses the reaction RNA(n) + a ribonucleoside 5'-triphosphate = RNA(n+1) + diphosphate. Functionally, DNA-dependent RNA polymerase catalyzes the transcription of DNA into RNA using the four ribonucleoside triphosphates as substrates. This Syntrophus aciditrophicus (strain SB) protein is DNA-directed RNA polymerase subunit alpha.